A 335-amino-acid polypeptide reads, in one-letter code: Biotin synthase (335 aa).

The Radical SAM core domain occupies 50–279 (ADIQRAALLS…KARVRLSAGR (230 aa)). [4Fe-4S] cluster is bound by residues cysteine 65, cysteine 69, and cysteine 72. The [2Fe-2S] cluster site is built by cysteine 110, cysteine 142, cysteine 202, and arginine 274.

This sequence belongs to the radical SAM superfamily. Biotin synthase family. As to quaternary structure, homodimer. [4Fe-4S] cluster is required as a cofactor. [2Fe-2S] cluster serves as cofactor.

It carries out the reaction (4R,5S)-dethiobiotin + (sulfur carrier)-SH + 2 reduced [2Fe-2S]-[ferredoxin] + 2 S-adenosyl-L-methionine = (sulfur carrier)-H + biotin + 2 5'-deoxyadenosine + 2 L-methionine + 2 oxidized [2Fe-2S]-[ferredoxin]. Its pathway is cofactor biosynthesis; biotin biosynthesis; biotin from 7,8-diaminononanoate: step 2/2. In terms of biological role, catalyzes the conversion of dethiobiotin (DTB) to biotin by the insertion of a sulfur atom into dethiobiotin via a radical-based mechanism. The chain is Biotin synthase from Methylorubrum extorquens (strain CM4 / NCIMB 13688) (Methylobacterium extorquens).